The primary structure comprises 421 residues: Mannose-1-phosphate guanyltransferase alpha-A (421 aa).

Belongs to the transferase hexapeptide repeat family.

It catalyses the reaction alpha-D-mannose 1-phosphate + GTP + H(+) = GDP-alpha-D-mannose + diphosphate. The protein operates within nucleotide-sugar biosynthesis; GDP-alpha-D-mannose biosynthesis; GDP-alpha-D-mannose from alpha-D-mannose 1-phosphate (GTP route): step 1/1. The polypeptide is Mannose-1-phosphate guanyltransferase alpha-A (gmppa-a) (Xenopus laevis (African clawed frog)).